The following is a 556-amino-acid chain: Formate--tetrahydrofolate ligase (556 aa).

T65 to S72 is an ATP binding site.

The protein belongs to the formate--tetrahydrofolate ligase family.

The catalysed reaction is (6S)-5,6,7,8-tetrahydrofolate + formate + ATP = (6R)-10-formyltetrahydrofolate + ADP + phosphate. The protein operates within one-carbon metabolism; tetrahydrofolate interconversion. In Streptococcus pneumoniae (strain 70585), this protein is Formate--tetrahydrofolate ligase.